We begin with the raw amino-acid sequence, 596 residues long: Beta-glucuronidase (596 aa).

Residues aspartate 168 and asparagine 412 each coordinate D-glucuronate. Glutamate 413 acts as the Proton donor in catalysis. Positions 464, 470, 502, 547, and 566 each coordinate D-glucuronate. Glutamate 502 acts as the Nucleophile in catalysis. Residues 564-566 carry the N-K motif motif; that stretch reads NKK.

It belongs to the glycosyl hydrolase 2 family.

The protein resides in the cytoplasm. The enzyme catalyses a beta-D-glucuronoside + H2O = D-glucuronate + an alcohol. In terms of biological role, displays beta-glucuronidase activity with the artificial substrate p-nitrophenyl-beta-D-glucuronide (PNPG). Is probably involved in the metabolism of oligosaccharides containing the 3-O-beta-D-glucopyranosyl-beta-D-glucuronide structure released from bacterial and plant acidic carbohydrates. The sequence is that of Beta-glucuronidase from Paenibacillus borealis.